The primary structure comprises 380 residues: Lipid-A-disaccharide synthase (380 aa).

This sequence belongs to the LpxB family.

It catalyses the reaction a lipid X + a UDP-2-N,3-O-bis[(3R)-3-hydroxyacyl]-alpha-D-glucosamine = a lipid A disaccharide + UDP + H(+). Its pathway is bacterial outer membrane biogenesis; LPS lipid A biosynthesis. Condensation of UDP-2,3-diacylglucosamine and 2,3-diacylglucosamine-1-phosphate to form lipid A disaccharide, a precursor of lipid A, a phosphorylated glycolipid that anchors the lipopolysaccharide to the outer membrane of the cell. This chain is Lipid-A-disaccharide synthase, found in Pseudomonas syringae pv. syringae (strain B728a).